Consider the following 602-residue polypeptide: Leucine-rich repeat-containing protein 40 (602 aa).

Ser-71 is subject to Phosphoserine. 20 LRR repeats span residues 83-104, 106-127, 129-150, 152-173, 175-196, 198-219, 221-242, 244-265, 266-286, 290-311, 313-335, 336-356, 400-421, 426-447, 450-472, 473-494, 496-517, 519-540, 543-564, and 566-586; these read DLTK…LRLL, ALTV…IREL, NLQK…ITNL, NLKC…FEQL, NLED…FSSL, SLVR…INRM, RLKH…LAGM, SLEL…PSCS, LLKE…EHLK, SILV…IILL, SLER…GNLH, LKFL…IISK, TLKI…VFDA, IVTS…MVEL, MVSD…CVLQ, KLTF…MESL, RLQT…LYRI, TLET…KMKM, NLTT…LGNC, and NLRT…AILM.

The sequence is that of Leucine-rich repeat-containing protein 40 (LRRC40) from Homo sapiens (Human).